Here is a 325-residue protein sequence, read N- to C-terminus: Elongation factor P--(R)-beta-lysine ligase (325 aa).

Substrate is bound at residue 76-78 (SPE). ATP is bound by residues 100 to 102 (RNE) and Asn109. Tyr118 is a binding site for substrate. 244-245 (EL) contacts ATP. A substrate-binding site is contributed by Glu251. Gly300 is an ATP binding site.

This sequence belongs to the class-II aminoacyl-tRNA synthetase family. EpmA subfamily. In terms of assembly, homodimer.

It carries out the reaction D-beta-lysine + L-lysyl-[protein] + ATP = N(6)-((3R)-3,6-diaminohexanoyl)-L-lysyl-[protein] + AMP + diphosphate + H(+). Functionally, with EpmB is involved in the beta-lysylation step of the post-translational modification of translation elongation factor P (EF-P). Catalyzes the ATP-dependent activation of (R)-beta-lysine produced by EpmB, forming a lysyl-adenylate, from which the beta-lysyl moiety is then transferred to the epsilon-amino group of a conserved specific lysine residue in EF-P. The chain is Elongation factor P--(R)-beta-lysine ligase from Hamiltonella defensa subsp. Acyrthosiphon pisum (strain 5AT).